The following is a 357-amino-acid chain: uncharacterized protein (357 aa).

This is an uncharacterized protein from Caenorhabditis elegans.